The sequence spans 201 residues: Adenylyl-sulfate kinase (201 aa).

Residue 35 to 42 participates in ATP binding; it reads GLSGSGKS. Ser-109 functions as the Phosphoserine intermediate in the catalytic mechanism.

This sequence belongs to the APS kinase family.

It catalyses the reaction adenosine 5'-phosphosulfate + ATP = 3'-phosphoadenylyl sulfate + ADP + H(+). It participates in sulfur metabolism; hydrogen sulfide biosynthesis; sulfite from sulfate: step 2/3. Catalyzes the synthesis of activated sulfate. In Erwinia tasmaniensis (strain DSM 17950 / CFBP 7177 / CIP 109463 / NCPPB 4357 / Et1/99), this protein is Adenylyl-sulfate kinase.